A 94-amino-acid polypeptide reads, in one-letter code: Large ribosomal subunit protein bL27 (94 aa).

Positions 1–9 are excised as a propeptide; that stretch reads MLRLDLQFF.

This sequence belongs to the bacterial ribosomal protein bL27 family. As to quaternary structure, part of the 50S ribosomal subunit. The N-terminus is cleaved by ribosomal processing cysteine protease Prp.

Plays a role in sporulation at high temperatures. The protein is Large ribosomal subunit protein bL27 (rpmA) of Bacillus subtilis (strain 168).